The chain runs to 287 residues: Shikimate dehydrogenase (NADP(+)) (287 aa).

Shikimate-binding positions include 20–22 and Thr-67; that span reads SRS. Residue Lys-71 is the Proton acceptor of the active site. NADP(+) is bound at residue Glu-84. 2 residues coordinate shikimate: Asn-93 and Asp-108. NADP(+) contacts are provided by residues 132-136, 156-161, and Met-226; these read GAGGA and NRTAAR. Tyr-228 contacts shikimate. Gly-250 is a binding site for NADP(+).

Belongs to the shikimate dehydrogenase family. As to quaternary structure, homodimer.

It carries out the reaction shikimate + NADP(+) = 3-dehydroshikimate + NADPH + H(+). It functions in the pathway metabolic intermediate biosynthesis; chorismate biosynthesis; chorismate from D-erythrose 4-phosphate and phosphoenolpyruvate: step 4/7. In terms of biological role, involved in the biosynthesis of the chorismate, which leads to the biosynthesis of aromatic amino acids. Catalyzes the reversible NADPH linked reduction of 3-dehydroshikimate (DHSA) to yield shikimate (SA). The protein is Shikimate dehydrogenase (NADP(+)) of Bordetella bronchiseptica (strain ATCC BAA-588 / NCTC 13252 / RB50) (Alcaligenes bronchisepticus).